We begin with the raw amino-acid sequence, 380 residues long: Protein phosphatase methylesterase 1 (380 aa).

The disordered stretch occupies residues 1-38 (MSALEKSMHLGRLPSRPPLPGSGGSQSGAKMRMGPGRK). Position 15 is a phosphoserine (S15). R16 carries the post-translational modification Asymmetric dimethylarginine; alternate. Omega-N-methylarginine; alternate is present on R16. Phosphoserine is present on S42. Catalysis depends on residues S156 and D181. Residues 255–265 (IEEEEEDEEGS) are compositionally biased toward acidic residues. The segment at 255 to 280 (IEEEEEDEEGSESVNKRKKEDDMETK) is disordered. The segment covering 268–280 (VNKRKKEDDMETK) has biased composition (basic and acidic residues). The active site involves H349.

It belongs to the AB hydrolase superfamily. As to quaternary structure, binds PPP2CA and PPP2CB. In terms of processing, phosphorylated by SIK1 following increases in intracellular sodium, leading to dissociation from the protein phosphatase 2A (PP2A) complex and subsequent dephosphorylation of sodium/potassium-transporting ATPase ATP1A1.

It catalyses the reaction [phosphatase 2A protein]-C-terminal L-leucine methyl ester + H2O = [phosphatase 2A protein]-C-terminal L-leucine + methanol + H(+). Its function is as follows. Demethylates proteins that have been reversibly carboxymethylated. Demethylates PPP2CB (in vitro) and PPP2CA. Binding to PPP2CA displaces the manganese ion and inactivates the enzyme. The polypeptide is Protein phosphatase methylesterase 1 (PPME1) (Bos taurus (Bovine)).